Reading from the N-terminus, the 316-residue chain is Serpentine receptor class gamma-4 (316 aa).

7 helical membrane passes run phenylalanine 21 to threonine 41, serine 50 to valine 70, isoleucine 99 to asparagine 121, methionine 140 to isoleucine 160, phenylalanine 188 to leucine 208, threonine 229 to phenylalanine 249, and isoleucine 258 to methionine 278.

This sequence belongs to the nematode receptor-like protein srg family.

The protein resides in the membrane. This chain is Serpentine receptor class gamma-4 (srg-4), found in Caenorhabditis elegans.